Reading from the N-terminus, the 428-residue chain is MHICIPVTEELQDTLGCRFVLYSVYLEGFLLCKVRYKDLHLWNEQIYRVFGNRLPKFPPKYYLAMTKAMTNERRLQLEQYLQQIVSDPVVTSSEIFMEYFKKLQMDTFNMPTVQLILRIYMPDGAAVELDVQTSDSAERVLEAALFKLGVSRELGEYFSLFITHKEAKGPFTVVKRIAGFELPFLTIWNLEDDQFQIEVRKWYMNPSNDAMLMGSTEAIDLLYLQAVQEFQMEWTRPTKDQQQKLQHCLKQQNKLKFLELMKTVEYYGYLHITSCTSDYPECDSEVTIWVGNNEMSCHFYSPGGHAENLRLSIKDLICWNVTLLPKKQEVMSPNHQHLELKFDYQQGSSLKCITIHTEQAFLLSSCLKKMLSERPVHRCKEELEIQVDKATCKSNIRPEQNGVHAKKQALLKDKREYCVVDNISDLDL.

The PX domain occupies 1 to 107 (MHICIPVTEE…EYFKKLQMDT (107 aa)).

This sequence belongs to the sorting nexin family.

Its function is as follows. May be involved in protein trafficking. The polypeptide is Sorting nexin-31 (snx31) (Xenopus tropicalis (Western clawed frog)).